The following is a 208-amino-acid chain: Ribosomal RNA small subunit methyltransferase G (208 aa).

S-adenosyl-L-methionine is bound by residues Gly-78, Phe-83, 101–103 (ERS), 129–130 (IE), and Arg-142.

It belongs to the methyltransferase superfamily. RNA methyltransferase RsmG family.

Its subcellular location is the cytoplasm. Its function is as follows. Specifically methylates the N7 position of a guanine in 16S rRNA. The polypeptide is Ribosomal RNA small subunit methyltransferase G (Borrelia garinii subsp. bavariensis (strain ATCC BAA-2496 / DSM 23469 / PBi) (Borreliella bavariensis)).